A 190-amino-acid chain; its full sequence is Elongation factor P-like protein (190 aa).

The protein belongs to the elongation factor P family.

This chain is Elongation factor P-like protein, found in Edwardsiella ictaluri (strain 93-146).